The sequence spans 211 residues: Protein-L-isoaspartate O-methyltransferase (211 aa).

Residue S60 is part of the active site.

The protein belongs to the methyltransferase superfamily. L-isoaspartyl/D-aspartyl protein methyltransferase family.

Its subcellular location is the cytoplasm. It catalyses the reaction [protein]-L-isoaspartate + S-adenosyl-L-methionine = [protein]-L-isoaspartate alpha-methyl ester + S-adenosyl-L-homocysteine. Its function is as follows. Catalyzes the methyl esterification of L-isoaspartyl residues in peptides and proteins that result from spontaneous decomposition of normal L-aspartyl and L-asparaginyl residues. It plays a role in the repair and/or degradation of damaged proteins. This chain is Protein-L-isoaspartate O-methyltransferase, found in Pseudomonas fluorescens (strain Pf0-1).